Reading from the N-terminus, the 2682-residue chain is 3-methylorcinaldehyde synthase (2682 aa).

Positions 111 to 272 are N-terminal acylcarrier protein transacylase domain (SAT); it reads LIPLVVIEQL…TEITLYGAFH (162 aa). Cys154 functions as the Nucleophile; for transacylase activity in the catalytic mechanism. His272 functions as the Proton donor/acceptor; for transacylase activity in the catalytic mechanism. Residues 401 to 826 form the Ketosynthase family 3 (KS3) domain; it reads ESDIAVIGMA…GSNASMIVMQ (426 aa). Catalysis depends on for beta-ketoacyl synthase activity residues Cys573, His708, and His749. The segment at 947–1237 is malonyl-CoA:ACP transacylase (MAT) domain; sequence FGGQVSTHIG…ITAMTSRALD (291 aa). An N-terminal hotdog fold region spans residues 1339–1468; sequence LTFVGFQDSS…GKIKFTNARD (130 aa). The PKS/mFAS DH domain maps to 1339-1651; the sequence is LTFVGFQDSS…YVKIPKLSMQ (313 aa). Positions 1367–1649 are product template (PT) domain; the sequence is LLLGHMTIQT…IAYVKIPKLS (283 aa). The Proton acceptor; for dehydratase activity role is filled by His1371. The interval 1496 to 1651 is C-terminal hotdog fold; sequence VDEVLANRSI…YVKIPKLSMQ (156 aa). Asp1555 functions as the Proton donor; for dehydratase activity in the catalytic mechanism. The region spanning 1723–1797 is the Carrier domain; it reads ENITERVKAV…DLMKVVTGVV (75 aa). Ser1757 carries the post-translational modification O-(pantetheine 4'-phosphoryl)serine. The segment at 2021-2211 is methyltransferase domain; it reads EWPLNQVMYT…AGYGHVYWTE (191 aa). The segment at 2303 to 2548 is NADPH-binding (R) domain; it reads VTGATGGLGA…LGWTPADAIA (246 aa).

The protein operates within secondary metabolite biosynthesis; terpenoid biosynthesis. Functionally, non-reducing polyketide synthase; part of the gene cluster that mediates the biosynthesis of eupenifeldin, a bistropolone meroterpenoid that acts as an antitumor agent. The first step of eupenifeldin biosynthesis is the biosynthesis of 3-methylorcinaldehyde performed by the non-reducing polyketide synthase eupA. Oxidative dearomatization of 3-methylorcinaldehyde likely catalyzed by the FAD-dependent monooxygenase eupB is followed by oxidative ring expansion by the 2-oxoglutarate-dependent dioxygenase eupC to provide the first tropolone metabolite, tropolone stipitaldehyde. In parallel, generation of sesquiterpene alpha-humulene from farnesylpyrophosphate (FPP) is catalyzed by the terpene cyclase eupE. The cytochrome P450 monooxygenase eupD then hydroxylates humulene to humulenol. The putative Diels-Alderase eupF probably catalyzes the formation of the tropolone-humulene skeleton by linking humulenol and the polyketide moiety. The short-chain dehydrogenase/reductase eupG and the flavin-dependent monooxygenase eupH are also essential for eupenifeldin biosynthesis and are likely the additional decorating enzymes of the tropolone-humulene skeleton to produce final eupenifeldin or derivatives. The chain is 3-methylorcinaldehyde synthase from Phoma sp.